Here is a 57-residue protein sequence, read N- to C-terminus: MAVPKKRTSIYKKRIRKNIWKKKGYWAALKAFSLAKSLSTGNSKSFFVRKISNQTLE.

In terms of assembly, component of the chloroplast large ribosomal subunit (LSU). Mature 70S chloroplast ribosomes of higher plants consist of a small (30S) and a large (50S) subunit. The 30S small subunit contains 1 molecule of ribosomal RNA (16S rRNA) and 24 different proteins. The 50S large subunit contains 3 rRNA molecules (23S, 5S and 4.5S rRNA) and 33 different proteins.

The protein resides in the plastid. It localises to the chloroplast. Its function is as follows. Component of the chloroplast ribosome (chloro-ribosome), a dedicated translation machinery responsible for the synthesis of chloroplast genome-encoded proteins, including proteins of the transcription and translation machinery and components of the photosynthetic apparatus. The sequence is that of Large ribosomal subunit protein bL32c (rpl32) from Spinacia oleracea (Spinach).